Reading from the N-terminus, the 306-residue chain is Pantothenate kinase (306 aa).

Residue 91 to 98 coordinates ATP; sequence GSVAVGKS.

This sequence belongs to the prokaryotic pantothenate kinase family.

The protein resides in the cytoplasm. It catalyses the reaction (R)-pantothenate + ATP = (R)-4'-phosphopantothenate + ADP + H(+). It participates in cofactor biosynthesis; coenzyme A biosynthesis; CoA from (R)-pantothenate: step 1/5. This Streptococcus pneumoniae (strain JJA) protein is Pantothenate kinase.